The chain runs to 163 residues: Nucleotide-binding protein RBAM_011030 (163 aa).

Belongs to the YajQ family.

Functionally, nucleotide-binding protein. The polypeptide is Nucleotide-binding protein RBAM_011030 (Bacillus velezensis (strain DSM 23117 / BGSC 10A6 / LMG 26770 / FZB42) (Bacillus amyloliquefaciens subsp. plantarum)).